Consider the following 106-residue polypeptide: Large ribosomal subunit protein bL21 (106 aa).

Belongs to the bacterial ribosomal protein bL21 family. In terms of assembly, part of the 50S ribosomal subunit. Contacts protein L20.

In terms of biological role, this protein binds to 23S rRNA in the presence of protein L20. The polypeptide is Large ribosomal subunit protein bL21 (Chlamydia felis (strain Fe/C-56) (Chlamydophila felis)).